The sequence spans 1002 residues: Leucine-rich repeat receptor-like serine/threonine-protein kinase BAM2 (1002 aa).

Positions 1-22 are cleaved as a signal peptide; the sequence is MKLLLLLLLLLLLHISHSFTVA. At 23-636 the chain is on the extracellular side; it reads KPITELHALL…SHVKPLSATT (614 aa). N51, N80, N97, N123, N130, N153, and N164 each carry an N-linked (GlcNAc...) asparagine glycan. 22 LRR repeats span residues 68–92, 93–116, 118–140, 141–165, 167–188, 189–213, 215–238, 239–262, 263–285, 286–309, 311–334, 335–358, 359–382, 384–406, 407–430, 431–456, 458–479, 480–503, 505–527, 528–551, 552–575, and 577–600; these read LRHV…VAHL, PLLQ…ISNL, ELRH…LSSG, LVNL…LTNL, QLRH…TYGT, WPVL…IGNL, TLRE…IGNL, SELV…IGKL, QKLD…ELGL, ISSL…SFSQ, KNLT…IGEM, PELE…LGEN, GRLV…MCSG, RLMT…LGKC, ESLT…LFGL, PKLS…GVSG, LGQI…IGNL, SGVQ…IGRL, QLSK…ISRC, KLLT…LTGM, KILN…IASM, and SLTS…QFSY. Residues N212 and N237 are each glycosylated (N-linked (GlcNAc...) asparagine). 2 N-linked (GlcNAc...) asparagine glycosylation sites follow: N312 and N346. N420 carries N-linked (GlcNAc...) asparagine glycosylation. The N-linked (GlcNAc...) asparagine glycan is linked to N478. N558, N587, and N602 each carry an N-linked (GlcNAc...) asparagine glycan. The helical transmembrane segment at 637-657 threads the bilayer; that stretch reads KLLLVLGLLFCSMVFAIVAII. The Cytoplasmic portion of the chain corresponds to 658 to 1002; sequence KARSLRNASE…SGSPPDLLSN (345 aa). A Phosphothreonine modification is found at T682. One can recognise a Protein kinase domain in the interval 690–967; the sequence is LKEDNIIGKG…VQILTEIPKI (278 aa). ATP is bound by residues 696–704 and K718; that span reads IGKGGAGIV. 2 positions are modified to phosphotyrosine: Y765 and Y803. The active-site Proton acceptor is D816. S851 is modified (phosphoserine). Residues Y859 and Y866 each carry the phosphotyrosine modification. T867 is modified (phosphothreonine). The disordered stretch occupies residues 969–1002; the sequence is LSKQQAAESDVTEKAPAINESSPDSGSPPDLLSN. Residues 989 to 1002 show a composition bias toward low complexity; sequence SSPDSGSPPDLLSN.

The protein belongs to the protein kinase superfamily. Ser/Thr protein kinase family. In terms of assembly, interacts with BAM1 and CLV1. Binds to the CLV3, CLE11, CLE18, CLE19, CLE22, CLE25, CLE26, CLE40, CLE41 and CLE42 mature peptides, probably via its extracellular leucine-rich repeat region. Expressed in seedlings, roots, rosette leaves, stems, inflorescences, flowers and siliques.

The protein resides in the cell membrane. The catalysed reaction is L-seryl-[protein] + ATP = O-phospho-L-seryl-[protein] + ADP + H(+). It carries out the reaction L-threonyl-[protein] + ATP = O-phospho-L-threonyl-[protein] + ADP + H(+). In terms of biological role, necessary for male gametophyte development, as well as ovule specification and function. Involved in cell-cell communication process required during early anther development, and regulating cell division and differentiation to organize cell layers. Required for the development of high-ordered vascular strands within the leaf and a correlated control of leaf shape, size and symmetry. May regulate the CLV1-dependent CLV3-mediated signaling in meristems maintenance. This is Leucine-rich repeat receptor-like serine/threonine-protein kinase BAM2 (BAM2) from Arabidopsis thaliana (Mouse-ear cress).